A 243-amino-acid chain; its full sequence is uncharacterized protein (243 aa).

Basic and acidic residues-rich tracts occupy residues 1-11 and 167-178; these read MSDEGYRELVE and RNRDPPRPSYLR. Disordered regions lie at residues 1 to 26 and 146 to 243; these read MSDEGYRELVESKSAPTTPGPWSPDR and ELYQ…CWPF. Residues 185–200 show a composition bias toward low complexity; the sequence is STTTARRPRAMTSTPE.

This is an uncharacterized protein from Canis lupus familiaris (Dog).